Consider the following 919-residue polypeptide: Translocase of chloroplast 101, chloroplastic (919 aa).

2 disordered regions span residues 20-47 (SASR…VIEG) and 64-211 (VDDE…NETR). A compositionally biased stretch (basic and acidic residues) spans 73–88 (SENKAVVETEKVESKP). Acidic residues predominate over residues 96-128 (FAEEDGDSDADAEDEDDEDDEDDDEDDDDEDDK). Residues 182-207 (QRPNGAPSTQLTATTEENANSDTAEG) show a composition bias toward polar residues. Residues 284-513 (DFACTILVLG…KLQETATPGR (230 aa)) enclose the AIG1-type G domain. Residues 293 to 300 (GKTGVGKS) are G1. 296 to 301 (GVGKSA) contacts GTP. Ser-300 lines the Mg(2+) pocket. The interval 319 to 323 (PSTNK) is G2. Residues 340–343 (DTPG) are G3. The interval 412–415 (THAS) is G4. Residues His-413 and 461-462 (EN) each bind GTP. The interval 461-463 (ENH) is G5. Disordered stretches follow at residues 540 to 585 (LPDE…LTKE) and 611 to 650 (RRRK…PMPD). Residues 543–567 (EQLDESDESDDDEEEEDSEADDYDE) show a composition bias toward acidic residues. The span at 574-585 (LSKEELEELTKE) shows a compositional bias: basic and acidic residues. A compositionally biased stretch (acidic residues) spans 629–638 (AQPDEADDEA). Residues 641–650 (PAAVPVPMPD) show a composition bias toward low complexity. The chain crosses the membrane as a helical span at residues 893-914 (MVLIGIVPILRSLINCRFGFGG).

It belongs to the TRAFAC class TrmE-Era-EngA-EngB-Septin-like GTPase superfamily. AIG1/Toc34/Toc159-like paraseptin GTPase family. TOC159 subfamily. As to quaternary structure, part of the TOC core complex. It depends on Mg(2+) as a cofactor.

It is found in the plastid. The protein localises to the chloroplast outer membrane. In terms of biological role, GTPase involved in protein precursor import into chloroplasts. Seems to recognize chloroplast-destined precursor proteins and regulate their presentation to the translocation channel through GTP hydrolysis. Probably specialized in the import of nuclear encoded non-photosynthetic preproteins from the cytoplasm to the chloroplast. The polypeptide is Translocase of chloroplast 101, chloroplastic (Physcomitrium patens (Spreading-leaved earth moss)).